A 92-amino-acid polypeptide reads, in one-letter code: Small ribosomal subunit protein bS20 (92 aa).

Belongs to the bacterial ribosomal protein bS20 family.

Functionally, binds directly to 16S ribosomal RNA. This Persephonella marina (strain DSM 14350 / EX-H1) protein is Small ribosomal subunit protein bS20.